The following is a 420-amino-acid chain: Glucose-1-phosphate adenylyltransferase (420 aa).

Alpha-D-glucose 1-phosphate-binding positions include Tyr107, Gly172, Glu187 to Lys188, and Ser205.

It belongs to the bacterial/plant glucose-1-phosphate adenylyltransferase family. As to quaternary structure, homotetramer.

It carries out the reaction alpha-D-glucose 1-phosphate + ATP + H(+) = ADP-alpha-D-glucose + diphosphate. Its pathway is glycan biosynthesis; glycogen biosynthesis. Functionally, involved in the biosynthesis of ADP-glucose, a building block required for the elongation reactions to produce glycogen. Catalyzes the reaction between ATP and alpha-D-glucose 1-phosphate (G1P) to produce pyrophosphate and ADP-Glc. This is Glucose-1-phosphate adenylyltransferase from Rhodopseudomonas palustris (strain BisB18).